Reading from the N-terminus, the 678-residue chain is UvrABC system protein B (678 aa).

Residues 26-185 (EGLEDGEAFQ…LTTMQYTRND (160 aa)) form the Helicase ATP-binding domain. 39–46 (GVTGSGKT) contacts ATP. The short motif at 92–115 (YYDYYQPEAYVPASDTYIAKDSSV) is the Beta-hairpin element. A Helicase C-terminal domain is found at 430–596 (QVDDLLGEIR…KLNKKITDIL (167 aa)). Residues 597–630 (EDSPYAPKPGASAAKLKAAEADGEYSPQEMQRMT) are disordered. Residues 635-670 (ASEIKRMEKQMYQAAKDLDFELAAKLRDDLKRLKSS) form the UVR domain.

The protein belongs to the UvrB family. In terms of assembly, forms a heterotetramer with UvrA during the search for lesions. Interacts with UvrC in an incision complex.

The protein resides in the cytoplasm. Its function is as follows. The UvrABC repair system catalyzes the recognition and processing of DNA lesions. A damage recognition complex composed of 2 UvrA and 2 UvrB subunits scans DNA for abnormalities. Upon binding of the UvrA(2)B(2) complex to a putative damaged site, the DNA wraps around one UvrB monomer. DNA wrap is dependent on ATP binding by UvrB and probably causes local melting of the DNA helix, facilitating insertion of UvrB beta-hairpin between the DNA strands. Then UvrB probes one DNA strand for the presence of a lesion. If a lesion is found the UvrA subunits dissociate and the UvrB-DNA preincision complex is formed. This complex is subsequently bound by UvrC and the second UvrB is released. If no lesion is found, the DNA wraps around the other UvrB subunit that will check the other stand for damage. This is UvrABC system protein B from Hydrogenovibrio crunogenus (strain DSM 25203 / XCL-2) (Thiomicrospira crunogena).